Reading from the N-terminus, the 273-residue chain is 6-carboxyhexanoate--CoA ligase (273 aa).

The protein belongs to the BioW family. In terms of assembly, homodimer. Mg(2+) is required as a cofactor.

It carries out the reaction heptanedioate + ATP + CoA = 6-carboxyhexanoyl-CoA + AMP + diphosphate. It participates in metabolic intermediate metabolism; pimeloyl-CoA biosynthesis; pimeloyl-CoA from pimelate: step 1/1. Catalyzes the transformation of pimelate into pimeloyl-CoA with concomitant hydrolysis of ATP to AMP. This Alkalihalophilus pseudofirmus (strain ATCC BAA-2126 / JCM 17055 / OF4) (Bacillus pseudofirmus) protein is 6-carboxyhexanoate--CoA ligase.